Consider the following 65-residue polypeptide: Large ribosomal subunit protein bL35 (65 aa).

Residues 1-15 (MPKMKTKKSAAKRFQ) show a composition bias toward basic residues. The interval 1 to 26 (MPKMKTKKSAAKRFQVRGSGSIKRGQ) is disordered.

The protein belongs to the bacterial ribosomal protein bL35 family.

This chain is Large ribosomal subunit protein bL35, found in Bordetella avium (strain 197N).